The following is a 172-amino-acid chain: Large ribosomal subunit protein uL11m (172 aa).

The protein belongs to the universal ribosomal protein uL11 family.

The protein localises to the mitochondrion. In Dictyostelium discoideum (Social amoeba), this protein is Large ribosomal subunit protein uL11m (mrpl11).